The chain runs to 237 residues: Sugar fermentation stimulation protein homolog (237 aa).

Belongs to the SfsA family.

This chain is Sugar fermentation stimulation protein homolog, found in Pseudomonas putida (strain W619).